The sequence spans 502 residues: Sodium/proline symporter (502 aa).

The Periplasmic portion of the chain corresponds to 1-5 (MAIST). The helical transmembrane segment at 6–26 (PMLVTFCVYIFGMILIGFIAW) threads the bilayer. The Cytoplasmic segment spans residues 27 to 41 (RSTKNFDDYILGGRS). Hydrophilic regions lie at residues 27-66 (RSTK…GLPG) and 88-124 (INWK…KSRI). The chain crosses the membrane as a helical span at residues 42-62 (LGPFVTALSAGASDMSGWLLM). Residues 63-67 (GLPGA) lie on the Periplasmic side of the membrane. Residues 68 to 88 (VFLSGISESWIAIGLTLGAWI) traverse the membrane as a helical segment. Residues 89 to 126 (NWKLVAGRLRVHTEYNNNALTLPDYFTGRFEDKSRILR) lie on the Cytoplasmic side of the membrane. Residues 127-147 (IISALVILLFFTIYCASGIVA) traverse the membrane as a helical segment. The Periplasmic portion of the chain corresponds to 148-162 (GARLFESTFGMSYET). The tract at residues 151-162 (LFESTFGMSYET) is hydrophilic. A helical transmembrane segment spans residues 163–183 (ALWAGAAATILYTFIGGFLAV). Topologically, residues 184-192 (SWTDTVQAS) are cytoplasmic. Positions 185–189 (WTDTV) are hydrophilic. Residues 193 to 213 (LMIFALILTPVIVIISVGGFG) traverse the membrane as a helical segment. 3 hydrophilic regions span residues 214–231 (DSLE…DMLK), 249–274 (FGQP…RRIS), and 296–319 (FNDH…ELAQ). Residues 214 to 234 (DSLEVIKQKSIENVDMLKGLN) lie on the Periplasmic side of the membrane. A helical membrane pass occupies residues 235 to 255 (FVAIISLMGWGLGYFGQPHIL). Residues 256 to 275 (ARFMAADSHHSIVHARRISM) are Cytoplasmic-facing. The chain crosses the membrane as a helical span at residues 276–296 (TWMILCLAGAVAVGFFGIAYF). At 297-319 (NDHPALAGAVNQNAERVFIELAQ) the chain is on the periplasmic side. The helical transmembrane segment at 320-340 (ILFNPWIAGILLSAILAAVMS) threads the bilayer. Residues 341 to 370 (TLSCQLLVCSSAITEDLYKAFLRKHASQKE) are Cytoplasmic-facing. Residues 341 to 370 (TLSCQLLVCSSAITEDLYKAFLRKHASQKE) form a hydrophilic region. A helical membrane pass occupies residues 371-391 (LVWVGRVMVLVVALVAIALAA). Residues 392 to 397 (NPENRV) are Periplasmic-facing. A hydrophilic region spans residues 392–397 (NPENRV). The helical transmembrane segment at 398-418 (LGLVSYAWAGFGAAFGPVVLF) threads the bilayer. Residues 419 to 427 (SVMWSRMTR) are Cytoplasmic-facing. 2 hydrophilic regions span residues 424–430 (RMTRNGA) and 446–448 (QFG). 2 helical membrane passes run 428-448 (NGAL…KQFG) and 449-469 (WLGL…IVVF). Topologically, residues 470–502 (SLLGKAPSAAMQKRFAEADAHYHSAPPSRLQES) are cytoplasmic. The interval 476–502 (PSAAMQKRFAEADAHYHSAPPSRLQES) is hydrophilic.

It belongs to the sodium:solute symporter (SSF) (TC 2.A.21) family. In terms of assembly, has been isolated from inner membrane preparations as a homodimer.

It is found in the cell inner membrane. The enzyme catalyses L-proline(in) + Na(+)(in) = L-proline(out) + Na(+)(out). Activity is stimulated by phosphatidylethanolamine and phosphatidylglycerol, but not by phosphatidylcholine and cardiolipin. Proline uptake is inhibited by the sulfhydryl reagent N-ethylmaleimide (NEM). Proline, in the presence of Na(+) or Li(+), protects the carrier functions from NEM-inactivation. Catalyzes the sodium-dependent uptake of extracellular L-proline. This protein is also capable of using lithium as the transport cation. Also catalyzes the uptake of propionate. This Escherichia coli (strain K12) protein is Sodium/proline symporter (putP).